Consider the following 214-residue polypeptide: SINYKNMPHQHLLTLLSLLPVGSNISTWWNFGSMLLACLMTQIITGFFLAIHYTANINLAFSSIIHLSRDVPCGWIMQNTHAISASLFFICIYIHIARGLYYGSYLYKEVWLSGTTLLIILMATAFFGYVLPWGQMSFWAATVITNLLTAIPYLGTTLTTWLWGGFAINDPTLTRFFALHFIFPFIIISMSSIHILLLHNEGSSNPLGTNSDIG.

4 helical membrane-spanning segments follow: residues 31 to 51, 75 to 96, 111 to 131, and 176 to 196; these read FGSM…FLAI, WIMQ…YIHI, WLSG…GYVL, and FFAL…IHIL. Heme b contacts are provided by His-81 and His-95. The heme b site is built by His-180 and His-194. His-199 provides a ligand contact to a ubiquinone.

This sequence belongs to the cytochrome b family. As to quaternary structure, the cytochrome bc1 complex contains 3 respiratory subunits (MT-CYB, CYC1 and UQCRFS1), 2 core proteins (UQCRC1 and UQCRC2) and probably 6 low-molecular weight proteins. Heme b serves as cofactor.

It localises to the mitochondrion inner membrane. Functionally, component of the ubiquinol-cytochrome c reductase complex (complex III or cytochrome b-c1 complex) that is part of the mitochondrial respiratory chain. The b-c1 complex mediates electron transfer from ubiquinol to cytochrome c. Contributes to the generation of a proton gradient across the mitochondrial membrane that is then used for ATP synthesis. The chain is Cytochrome b (MT-CYB) from Bothrops bilineatus (Green jararaca).